The primary structure comprises 406 residues: Argininosuccinate synthase (406 aa).

ATP contacts are provided by residues 11–19 and Ala-38; that span reads AYSGGLDTS. L-citrulline-binding residues include Tyr-91 and Ser-96. Residue Gly-121 participates in ATP binding. Residues Thr-123, Asn-127, and Asp-128 each coordinate L-aspartate. Asn-127 contacts L-citrulline. Residues Arg-131, Ser-181, Ser-190, Glu-266, and Tyr-278 each contribute to the L-citrulline site.

Belongs to the argininosuccinate synthase family. Type 1 subfamily. Homotetramer.

The protein resides in the cytoplasm. The enzyme catalyses L-citrulline + L-aspartate + ATP = 2-(N(omega)-L-arginino)succinate + AMP + diphosphate + H(+). Its pathway is amino-acid biosynthesis; L-arginine biosynthesis; L-arginine from L-ornithine and carbamoyl phosphate: step 2/3. This chain is Argininosuccinate synthase, found in Campylobacter jejuni subsp. jejuni serotype O:23/36 (strain 81-176).